The following is a 1103-amino-acid chain: Voltage-dependent calcium channel subunit alpha-2/delta-1 (1103 aa).

The N-terminal stretch at methionine 1–glutamate 24 is a signal peptide. At glutamate 25–glycine 1073 the chain is on the extracellular side. Residue asparagine 92 is glycosylated (N-linked (GlcNAc...) asparagine). The residue at position 119 (serine 119) is a Phosphoserine. N-linked (GlcNAc...) asparagine glycans are attached at residues asparagine 136 and asparagine 184. Residues aspartate 253–leucine 430 form the VWFA domain. 3 residues coordinate a divalent metal cation: aspartate 259, serine 261, and serine 263. The short motif at aspartate 259–serine 263 is the MIDAS-like motif element. Residues asparagine 324 and asparagine 348 are each glycosylated (N-linked (GlcNAc...) asparagine). Residues cysteine 404 and cysteine 1059 are joined by a disulfide bond. The Cache domain maps to tryptophan 446–proline 537. N-linked (GlcNAc...) asparagine glycans are attached at residues asparagine 613, asparagine 781, and asparagine 888. Residues valine 1074–leucine 1094 form a helical membrane-spanning segment. The Cytoplasmic segment spans residues valine 1095–leucine 1103.

This sequence belongs to the calcium channel subunit alpha-2/delta family. In terms of assembly, dimer formed of alpha-2-1 and delta-1 chains; disulfide-linked. Voltage-dependent calcium channels are multisubunit complexes, consisting of alpha-1 (CACNA1), alpha-2 (CACNA2D), beta (CACNB) and delta (CACNA2D) subunits in a 1:1:1:1 ratio. Proteolytically processed into subunits alpha-2-1 and delta-1 that are disulfide-linked. Isoform 2A is expressed in skeletal muscle and aorta. Isoform 2B is expressed in brain. Isoform 2C is expressed in heart. Isoform 2D is expressed in heart and smooth muscle. Isoform 2E is expressed in smooth muscle. All five isoforms are expressed in the cardiovascular system.

The protein resides in the membrane. Its subcellular location is the cell membrane. The alpha-2/delta subunit of voltage-dependent calcium channels regulates calcium current density and activation/inactivation kinetics of the calcium channel. Plays an important role in excitation-contraction coupling. The polypeptide is Voltage-dependent calcium channel subunit alpha-2/delta-1 (Cacna2d1) (Mus musculus (Mouse)).